A 116-amino-acid chain; its full sequence is uncharacterized protein (116 aa).

This sequence belongs to the mimivirus L15/L51/R83 family.

This is an uncharacterized protein from Acanthamoeba polyphaga mimivirus (APMV).